A 205-amino-acid polypeptide reads, in one-letter code: Adenylyl-sulfate kinase (205 aa).

ATP is bound at residue 31–38 (GLSGAGKS). Catalysis depends on serine 105, which acts as the Phosphoserine intermediate.

This sequence belongs to the APS kinase family.

It catalyses the reaction adenosine 5'-phosphosulfate + ATP = 3'-phosphoadenylyl sulfate + ADP + H(+). It participates in sulfur metabolism; hydrogen sulfide biosynthesis; sulfite from sulfate: step 2/3. Catalyzes the synthesis of activated sulfate. In Shewanella sp. (strain MR-4), this protein is Adenylyl-sulfate kinase.